The sequence spans 232 residues: Ribose-5-phosphate isomerase A (232 aa).

Substrate-binding positions include 34-37, 89-92, and 102-105; these read TGST, DGAD, and KGGG. Catalysis depends on Glu-111, which acts as the Proton acceptor. Lys-129 contacts substrate.

Belongs to the ribose 5-phosphate isomerase family. In terms of assembly, homodimer.

The enzyme catalyses aldehydo-D-ribose 5-phosphate = D-ribulose 5-phosphate. It participates in carbohydrate degradation; pentose phosphate pathway; D-ribose 5-phosphate from D-ribulose 5-phosphate (non-oxidative stage): step 1/1. In terms of biological role, catalyzes the reversible conversion of ribose-5-phosphate to ribulose 5-phosphate. In Protochlamydia amoebophila (strain UWE25), this protein is Ribose-5-phosphate isomerase A.